The primary structure comprises 348 residues: Sec-independent protein translocase protein TatC (348 aa).

A run of 6 helical transmembrane segments spans residues 7–27 (LCLT…MDIL), 162–182 (VVIS…PGLL), 192–212 (CMAV…FIVL), 244–264 (MILM…FVKL), 278–298 (YAIV…DVAT), and 299–319 (MMLM…LAWM).

It belongs to the TatC family. As to quaternary structure, forms a complex with TatA.

It localises to the cell membrane. Its function is as follows. Part of the twin-arginine translocation (Tat) system that transports large folded proteins containing a characteristic twin-arginine motif in their signal peptide across membranes. The protein is Sec-independent protein translocase protein TatC of Akkermansia muciniphila (strain ATCC BAA-835 / DSM 22959 / JCM 33894 / BCRC 81048 / CCUG 64013 / CIP 107961 / Muc).